Here is a 366-residue protein sequence, read N- to C-terminus: Alanine racemase (366 aa).

The active-site Proton acceptor; specific for D-alanine is the lysine 40. Lysine 40 is subject to N6-(pyridoxal phosphate)lysine. Residue arginine 136 coordinates substrate. The active-site Proton acceptor; specific for L-alanine is the tyrosine 263. Methionine 310 serves as a coordination point for substrate.

This sequence belongs to the alanine racemase family. Pyridoxal 5'-phosphate serves as cofactor.

It catalyses the reaction L-alanine = D-alanine. It participates in amino-acid biosynthesis; D-alanine biosynthesis; D-alanine from L-alanine: step 1/1. Its function is as follows. Catalyzes the interconversion of L-alanine and D-alanine. May also act on other amino acids. The sequence is that of Alanine racemase (alr) from Streptococcus pyogenes serotype M12 (strain MGAS2096).